The primary structure comprises 143 residues: Holo-[acyl-carrier-protein] synthase (143 aa).

Positions 9 and 63 each coordinate Mg(2+).

Belongs to the P-Pant transferase superfamily. AcpS family. Mg(2+) is required as a cofactor.

Its subcellular location is the cytoplasm. The catalysed reaction is apo-[ACP] + CoA = holo-[ACP] + adenosine 3',5'-bisphosphate + H(+). Its function is as follows. Transfers the 4'-phosphopantetheine moiety from coenzyme A to a Ser of acyl-carrier-protein. This is Holo-[acyl-carrier-protein] synthase from Burkholderia pseudomallei (strain 668).